Consider the following 209-residue polypeptide: uncharacterized protein (209 aa).

Positions 13–75 (LSAVDKQMDT…AINLAAVMTD (63 aa)) form a coiled coil. The tract at residues 107 to 135 (ATPLPSSNTNNEQSMSTYSSSISGKTSET) is disordered. Residues 110–119 (LPSSNTNNEQ) are compositionally biased toward polar residues. Low complexity predominate over residues 120–133 (SMSTYSSSISGKTS).

The protein belongs to the asfivirus K205R family.

The protein localises to the host cytoplasm. Its function is as follows. Induces host endoplasmic reticulum stress and consequently activates autophagy and NF-kappa-B signaling pathway. In turn, may induce autophagy-mediated STING1 degradation and innate immune evasion. This is an uncharacterized protein from Ornithodoros (relapsing fever ticks).